Reading from the N-terminus, the 106-residue chain is ATP-dependent Clp protease adapter protein ClpS (106 aa).

Belongs to the ClpS family. Binds to the N-terminal domain of the chaperone ClpA.

In terms of biological role, involved in the modulation of the specificity of the ClpAP-mediated ATP-dependent protein degradation. This chain is ATP-dependent Clp protease adapter protein ClpS, found in Vibrio cholerae serotype O1 (strain ATCC 39541 / Classical Ogawa 395 / O395).